Reading from the N-terminus, the 21-residue chain is Tricyclic peptide MS-271 (21 aa).

A cross-link (3-cysteinyl-aspartic acid (Cys-Asp)) is located at residues 1–9; that stretch reads CLGVGSCND. Disulfide bonds link Cys1/Cys13 and Cys7/Cys19. At Trp21 the chain carries D-tryptophan.

Its function is as follows. Inhibits chicken myosin light chain kinase with an IC(50) of 8 M. Does not inhibit bovine cAMP-dependent protein kinase or rat protein kinase C. Antibacterial activity against the Gram-positive bacteria B.subtilis, E.faecium and S.aureus. No antibacterial activity against the Gram-negative bacteria E.coli, K.pneumoniae, P.aeruginosa, P.vulgaris, S.sonnei and S.typhosa. No antifungal activity against C.albicans. The polypeptide is Tricyclic peptide MS-271 (Streptomyces sp).